A 303-amino-acid polypeptide reads, in one-letter code: Glutamyl-Q tRNA(Asp) synthetase (303 aa).

L-glutamate is bound by residues 16-20 and Glu52; that span reads RFAPS. Residues 19–29 carry the 'HIGH' region motif; that stretch reads PSPSGPLHFGS. Zn(2+)-binding residues include Cys108, Cys110, Tyr122, and Cys126. L-glutamate is bound by residues Tyr177 and Arg195. Positions 233 to 237 match the 'KMSKS' region motif; the sequence is KLSKQ. Residue Lys236 coordinates ATP.

This sequence belongs to the class-I aminoacyl-tRNA synthetase family. GluQ subfamily. The cofactor is Zn(2+).

Functionally, catalyzes the tRNA-independent activation of glutamate in presence of ATP and the subsequent transfer of glutamate onto a tRNA(Asp). Glutamate is transferred on the 2-amino-5-(4,5-dihydroxy-2-cyclopenten-1-yl) moiety of the queuosine in the wobble position of the QUC anticodon. In Vibrio vulnificus (strain CMCP6), this protein is Glutamyl-Q tRNA(Asp) synthetase.